The chain runs to 224 residues: Putative adhesin A1G_07050 (224 aa).

The signal sequence occupies residues 1-22 (MKKLLLIAATSATILSSSVSFA).

The protein is Putative adhesin A1G_07050 of Rickettsia rickettsii (strain Sheila Smith).